The chain runs to 44 residues: Large ribosomal subunit protein bL34 (44 aa).

It belongs to the bacterial ribosomal protein bL34 family.

The sequence is that of Large ribosomal subunit protein bL34 from Buchnera aphidicola subsp. Cinara cedri (strain Cc).